The following is a 305-amino-acid chain: Tetraspanin-12 (305 aa).

The Cytoplasmic segment spans residues 1–12 (MAREDSVKCLRC). 2 S-palmitoyl cysteine lipidation sites follow: C9 and C12. The helical transmembrane segment at 13–33 (LLYALNLLFWLMSISVLAVSA) threads the bilayer. Residues 34-59 (WMRDYLNNVLTLTAETRVEEAVILTY) are Extracellular-facing. A helical membrane pass occupies residues 60–80 (FPVVHPVMIAVCCFLIIVGML). A lipid anchor (S-palmitoyl cysteine) is attached at C83. Residues 90–110 (LLLLAWYFGTLLVIFCVELAC) form a helical membrane-spanning segment. The Extracellular segment spans residues 111 to 224 (GVWTYEQEVM…RGTKQLQVLR (114 aa)). The helical transmembrane segment at 225–245 (FLGISIGVTQILAMILTITLL) threads the bilayer. Residues 246-305 (WALYYDRREPGTDQMLSLKNDASQHLSCHSVELLKPSLSRIFEHTSMANSFNTHFEMEEL) are Cytoplasmic-facing.

It belongs to the tetraspanin (TM4SF) family. As to quaternary structure, component of a complex, at least composed of TSPAN12, FZD4 and norrin (NDP). Interacts (when palmitoylated) with ADAM10. Interacts with MMP14/MT1-MMP. In terms of processing, palmitoylated; required for interaction with ADAM10. The precise position of palmitoylated residues is unclear and occurs either on Cys-9, Cys-12 and/or Cys-83.

The protein localises to the cell membrane. In terms of biological role, regulator of cell surface receptor signal transduction. Plays a central role in retinal vascularization by regulating norrin (NDP) signal transduction. Acts in concert with norrin (NDP) to promote FZD4 multimerization and subsequent activation of FZD4, leading to promote accumulation of beta-catenin (CTNNB1) and stimulate LEF/TCF-mediated transcriptional programs. Suprisingly, it only activates the norrin (NDP)-dependent activation of FZD4, while it does not activate the Wnt-dependent activation of FZD4, suggesting the existence of a Wnt-independent signaling that also promote accumulation the beta-catenin (CTNNB1). Acts as a regulator of membrane proteinases such as ADAM10 and MMP14/MT1-MMP. Activates ADAM10-dependent cleavage activity of amyloid precursor protein (APP). Activates MMP14/MT1-MMP-dependent cleavage activity. The sequence is that of Tetraspanin-12 (Tspan12) from Rattus norvegicus (Rat).